Consider the following 310-residue polypeptide: Ribonuclease Z (310 aa).

Residues H63, H65, D67, H68, H141, D212, and H270 each contribute to the Zn(2+) site. The active-site Proton acceptor is D67.

It belongs to the RNase Z family. As to quaternary structure, homodimer. Zn(2+) serves as cofactor.

It carries out the reaction Endonucleolytic cleavage of RNA, removing extra 3' nucleotides from tRNA precursor, generating 3' termini of tRNAs. A 3'-hydroxy group is left at the tRNA terminus and a 5'-phosphoryl group is left at the trailer molecule.. In terms of biological role, zinc phosphodiesterase, which displays some tRNA 3'-processing endonuclease activity. Probably involved in tRNA maturation, by removing a 3'-trailer from precursor tRNA. The chain is Ribonuclease Z from Limosilactobacillus fermentum (strain NBRC 3956 / LMG 18251) (Lactobacillus fermentum).